The chain runs to 153 residues: Virion assembly protein OPG100 (153 aa).

This sequence belongs to the orthopoxvirus OPG100 family. As to quaternary structure, homodimer. Part of a complex composed of the kinase OPG054, OPG092, OPG114, OPG115, OPG142 and OPG157. Interacts with OPG175.

It is found in the virion. The protein localises to the host cytoplasm. In terms of biological role, late protein which is a part of a large complex required for early virion morphogenesis. This complex participates in the formation of virosomes and the incorporation of virosomal contents into nascent immature virions. Plays a role in DNA packaging during immature virions (IV) formation. In Vaccinia virus (strain Western Reserve) (VACV), this protein is Virion assembly protein OPG100 (OPG100).